Consider the following 348-residue polypeptide: 2-methyl-6-phytyl-1,4-hydroquinone methyltransferase 2, chloroplastic (348 aa).

Positions 1–48 are disordered; that stretch reads MAMASSAYAPAGGVGTHSAPGRIRPPRGLGFSTTTTKSRPLVLTRRGG. Residues 1–59 constitute a chloroplast transit peptide; it reads MAMASSAYAPAGGVGTHSAPGRIRPPRGLGFSTTTTKSRPLVLTRRGGGGGNISVARLR. Over 60-317 the chain is Chloroplast intermembrane; sequence CAASSSSAAA…PVNPITFLFR (258 aa). The SAM motif I stretch occupies residues 125–134; the sequence is VVDVGGGTGF. The SAM motif II stretch occupies residues 170 to 183; that stretch reads VTIMEGDAEDLPFP. The tract at residues 211-224 is SAM motif III; it reads RVLRLGGVACMIGP. A helical membrane pass occupies residues 318-338; it reads FLMGTICAAYYVLVPIYMWIK. At 339–348 the chain is on the stromal side; that stretch reads DQIVPKGMPI.

Belongs to the class I-like SAM-binding methyltransferase superfamily. MPBQ/MBSQ MT family.

Its subcellular location is the plastid. It localises to the chloroplast inner membrane. It catalyses the reaction 2-methyl-6-phytyl-1,4-benzene-1,4-diol + S-adenosyl-L-methionine = 2,3-dimethyl-6-phytylbenzene-1,4-diol + S-adenosyl-L-homocysteine + H(+). The enzyme catalyses 2-methyl-6-(all-trans-nonaprenyl)benzene-1,4-diol + S-adenosyl-L-methionine = plastoquinol-9 + S-adenosyl-L-homocysteine + H(+). It carries out the reaction 6-geranylgeranyl-2-methylbenzene-1,4-diol + S-adenosyl-L-methionine = 6-geranylgeranyl-2,3-dimethylbenzene-1,4-diol + S-adenosyl-L-homocysteine + H(+). It functions in the pathway cofactor biosynthesis; tocopherol biosynthesis. Involved in a key methylation step in both tocopherols (vitamin E) and plastoquinone synthesis. Catalyzes the conversion of 2-methyl-6-phytyl-1,4-hydroquinone (MPBQ) to 2,3-dimethyl-6-phytyl-1,4-hydroquinone (DMPQ, a substrate for tocopherol cyclase), and 2-methyl-6-solanyl-1,4-benzoquinone (MSBQ) to plastoquinone. This Oryza sativa subsp. japonica (Rice) protein is 2-methyl-6-phytyl-1,4-hydroquinone methyltransferase 2, chloroplastic.